We begin with the raw amino-acid sequence, 135 residues long: Holo-[acyl-carrier-protein] synthase (135 aa).

Positions 7 and 57 each coordinate Mg(2+).

Belongs to the P-Pant transferase superfamily. AcpS family. Mg(2+) is required as a cofactor.

The protein localises to the cytoplasm. It carries out the reaction apo-[ACP] + CoA = holo-[ACP] + adenosine 3',5'-bisphosphate + H(+). Its function is as follows. Transfers the 4'-phosphopantetheine moiety from coenzyme A to a Ser of acyl-carrier-protein. This chain is Holo-[acyl-carrier-protein] synthase, found in Corynebacterium glutamicum (strain ATCC 13032 / DSM 20300 / JCM 1318 / BCRC 11384 / CCUG 27702 / LMG 3730 / NBRC 12168 / NCIMB 10025 / NRRL B-2784 / 534).